A 531-amino-acid polypeptide reads, in one-letter code: Peptide chain release factor 3 (531 aa).

Positions 10–278 constitute a tr-type G domain; sequence RRRRTFAIIS…SLIDWAPAPK (269 aa). GTP-binding positions include 19 to 26, 87 to 91, and 141 to 144; these read SHPDAGKT, DTPGH, and NKYD.

It belongs to the TRAFAC class translation factor GTPase superfamily. Classic translation factor GTPase family. PrfC subfamily.

Its subcellular location is the cytoplasm. Its function is as follows. Increases the formation of ribosomal termination complexes and stimulates activities of RF-1 and RF-2. It binds guanine nucleotides and has strong preference for UGA stop codons. It may interact directly with the ribosome. The stimulation of RF-1 and RF-2 is significantly reduced by GTP and GDP, but not by GMP. The protein is Peptide chain release factor 3 of Neisseria gonorrhoeae (strain NCCP11945).